Here is a 231-residue protein sequence, read N- to C-terminus: Small ribosomal subunit protein uS3 (231 aa).

The KH type-2 domain maps to 39-107 (IRKFIMKTLP…GVSLNIVEIR (69 aa)).

It belongs to the universal ribosomal protein uS3 family. In terms of assembly, part of the 30S ribosomal subunit. Forms a tight complex with proteins S10 and S14.

Binds the lower part of the 30S subunit head. Binds mRNA in the 70S ribosome, positioning it for translation. This chain is Small ribosomal subunit protein uS3, found in Zymomonas mobilis subsp. mobilis (strain ATCC 31821 / ZM4 / CP4).